A 206-amino-acid chain; its full sequence is Large ribosomal subunit protein uL13w (206 aa).

It belongs to the universal ribosomal protein uL13 family.

The polypeptide is Large ribosomal subunit protein uL13w (RPL13AD) (Arabidopsis thaliana (Mouse-ear cress)).